A 66-amino-acid polypeptide reads, in one-letter code: U10-theraphotoxin-Cg1a 1 (66 aa).

The signal sequence occupies residues 1–21 (MKTSVLFVIFGLALLFCLSFA). Positions 22–29 (AELEDTGR) are excised as a propeptide. 3 cysteine pairs are disulfide-bonded: cysteine 31-cysteine 46, cysteine 38-cysteine 51, and cysteine 45-cysteine 58.

Belongs to the neurotoxin 10 (Hwtx-1) family. 29 (Jztx-13) subfamily. Expressed by the venom gland.

The protein resides in the secreted. In terms of biological role, probable ion channel inhibitor. In Chilobrachys guangxiensis (Chinese earth tiger tarantula), this protein is U10-theraphotoxin-Cg1a 1.